The chain runs to 86 residues: uncharacterized protein (86 aa).

This is an uncharacterized protein from Saccharomyces cerevisiae (strain ATCC 204508 / S288c) (Baker's yeast).